Consider the following 212-residue polypeptide: Large ribosomal subunit protein uL3 (212 aa).

Glutamine 153 is subject to N5-methylglutamine.

It belongs to the universal ribosomal protein uL3 family. As to quaternary structure, part of the 50S ribosomal subunit. Forms a cluster with proteins L14 and L19. Post-translationally, methylated by PrmB.

Functionally, one of the primary rRNA binding proteins, it binds directly near the 3'-end of the 23S rRNA, where it nucleates assembly of the 50S subunit. This Shewanella sediminis (strain HAW-EB3) protein is Large ribosomal subunit protein uL3.